We begin with the raw amino-acid sequence, 126 residues long: Small ribosomal subunit protein uS8 (126 aa).

The protein belongs to the universal ribosomal protein uS8 family. As to quaternary structure, part of the 30S ribosomal subunit. Contacts proteins S5 and S12.

One of the primary rRNA binding proteins, it binds directly to 16S rRNA central domain where it helps coordinate assembly of the platform of the 30S subunit. The chain is Small ribosomal subunit protein uS8 from Desulfovibrio desulfuricans (strain ATCC 27774 / DSM 6949 / MB).